A 507-amino-acid chain; its full sequence is FSD1-like protein (507 aa).

Residues 70 to 109 adopt a coiled-coil conformation; sequence KQEQVRKSQELQSQLSQCNNALENSEELLEFATRSLDIKE. The 58-residue stretch at 105-162 folds into the COS domain; that stretch reads LDIKEPEEFSKAARQIKDRVTMASAFRLSLKPKVSDNMTHLMVDFSQERQMLQTLKFL. The 105-residue stretch at 164 to 268 folds into the Fibronectin type-III domain; it reads VPKAPEIDPV…DPVTLETRAL (105 aa). The 194-residue stretch at 291–484 folds into the B30.2/SPRY domain; that stretch reads DPTGGKGQES…LSTGMQVPSA (194 aa). Positions 292-345 are disordered; it reads PTGGKGQESKIKGKENKGSVHVTSLKKHTSGTPSPKRTSVGSRPPAVRGSRDRF. Over residues 298 to 309 the composition is skewed to basic and acidic residues; it reads QESKIKGKENKG. The span at 321 to 332 shows a compositional bias: polar residues; that stretch reads SGTPSPKRTSVG. Residues S498 and S501 each carry the phosphoserine modification.

This is FSD1-like protein (Fsd1l) from Mus musculus (Mouse).